The sequence spans 459 residues: Argininosuccinate lyase (459 aa).

It belongs to the lyase 1 family. Argininosuccinate lyase subfamily.

It is found in the cytoplasm. It carries out the reaction 2-(N(omega)-L-arginino)succinate = fumarate + L-arginine. It participates in amino-acid biosynthesis; L-arginine biosynthesis; L-arginine from L-ornithine and carbamoyl phosphate: step 3/3. The protein is Argininosuccinate lyase of Lactococcus lactis subsp. cremoris (strain MG1363).